The sequence spans 74 residues: Kappa-scoloptoxin(07)-Ssm2c (74 aa).

A signal peptide spans 1 to 19 (MLVFYAPLFVSIFSNTVMG). The propeptide occupies 20–41 (ATIDKPIPKPILREAIEKIAVN).

It belongs to the scoloptoxin-07 family. In terms of processing, contains 3 disulfide bonds. Expressed by the venom gland.

The protein resides in the secreted. In terms of biological role, inhibits voltage-gated potassium channels. The sequence is that of Kappa-scoloptoxin(07)-Ssm2c from Scolopendra mutilans (Chinese red-headed centipede).